The sequence spans 118 residues: Small ribosomal subunit protein uS10 (118 aa).

Ser-37 carries the post-translational modification Phosphoserine.

This sequence belongs to the universal ribosomal protein uS10 family. As to quaternary structure, component of the small ribosomal subunit (SSU). Mature yeast ribosomes consist of a small (40S) and a large (60S) subunit. The 40S small subunit contains 1 molecule of ribosomal RNA (18S rRNA) and at least 33 different proteins. The large 60S subunit contains 3 rRNA molecules (25S, 5.8S and 5S rRNA) and at least 46 different proteins.

It is found in the cytoplasm. Functionally, component of the ribosome, a large ribonucleoprotein complex responsible for the synthesis of proteins in the cell. The small ribosomal subunit (SSU) binds messenger RNAs (mRNAs) and translates the encoded message by selecting cognate aminoacyl-transfer RNA (tRNA) molecules. The large subunit (LSU) contains the ribosomal catalytic site termed the peptidyl transferase center (PTC), which catalyzes the formation of peptide bonds, thereby polymerizing the amino acids delivered by tRNAs into a polypeptide chain. The nascent polypeptides leave the ribosome through a tunnel in the LSU and interact with protein factors that function in enzymatic processing, targeting, and the membrane insertion of nascent chains at the exit of the ribosomal tunnel. The protein is Small ribosomal subunit protein uS10 (rps20) of Schizosaccharomyces pombe (strain 972 / ATCC 24843) (Fission yeast).